We begin with the raw amino-acid sequence, 68 residues long: Copper transport protein ATOX1 (68 aa).

The 63-residue stretch at 1 to 63 (MPKHEFSVDM…TLEKTGKAVS (63 aa)) folds into the HMA domain. 2 residues coordinate Cu cation: cysteine 12 and cysteine 15. The residue at position 47 (serine 47) is a Phosphoserine. An N6-acetyllysine modification is found at lysine 60.

It belongs to the ATX1 family. In terms of assembly, homodimer. Interacts with ATP7B. Interacts with ATP7A. Interacts (via dimer form) with SLC31A1 (via C-terminal domain); this interaction improves ATOX1 stability and controls intracellular Cu(I) levels.

Binds and deliver cytosolic copper to the copper ATPase proteins. May be important in cellular antioxidant defense. In Canis lupus familiaris (Dog), this protein is Copper transport protein ATOX1.